Reading from the N-terminus, the 147-residue chain is MRVLVNNPRAQYDYYLLTGYCAGLVLKGSEVKSLALGQGSLKEAYVFIDKHEVYIKDFSISPYAFSGEFNHPFKRVKKLLLNRNEIKQITARQKQEGLSIIPLKVFFKNGKIKMEIWLAKPKKKFDKREAIKSKTIQRELRQQYGSP.

It belongs to the SmpB family.

The protein localises to the cytoplasm. Functionally, required for rescue of stalled ribosomes mediated by trans-translation. Binds to transfer-messenger RNA (tmRNA), required for stable association of tmRNA with ribosomes. tmRNA and SmpB together mimic tRNA shape, replacing the anticodon stem-loop with SmpB. tmRNA is encoded by the ssrA gene; the 2 termini fold to resemble tRNA(Ala) and it encodes a 'tag peptide', a short internal open reading frame. During trans-translation Ala-aminoacylated tmRNA acts like a tRNA, entering the A-site of stalled ribosomes, displacing the stalled mRNA. The ribosome then switches to translate the ORF on the tmRNA; the nascent peptide is terminated with the 'tag peptide' encoded by the tmRNA and targeted for degradation. The ribosome is freed to recommence translation, which seems to be the essential function of trans-translation. This is SsrA-binding protein from Mycoplasma pneumoniae (strain ATCC 29342 / M129 / Subtype 1) (Mycoplasmoides pneumoniae).